Reading from the N-terminus, the 515-residue chain is Mucin-like protein Glc1.8a (515 aa).

Residues 1–20 (MSQITLIILILAIGFSCTKS) form the signal peptide. The Extracellular segment spans residues 21-467 (HPINSTRDGE…ANDIKKPAFP (447 aa)). N-linked (GlcNAc...) asparagine; by host glycans are attached at residues asparagine 24, asparagine 45, asparagine 51, asparagine 60, asparagine 85, asparagine 93, asparagine 102, asparagine 123, asparagine 129, asparagine 138, asparagine 180, asparagine 201, asparagine 207, asparagine 216, asparagine 258, asparagine 279, asparagine 285, asparagine 319, asparagine 327, asparagine 336, asparagine 357, asparagine 363, asparagine 372, asparagine 397, asparagine 405, asparagine 413, asparagine 434, and asparagine 441. Positions 80–114 (SKKDENITGQSEINTSAKSQPINSTRDGEDSGTDL) are disordered. Over residues 86-104 (ITGQSEINTSAKSQPINST) the composition is skewed to polar residues. The interval 314–358 (SKKDENVTGQSEINTSAKSQPINSTRDGEDSGTDLKNLLTDPANT) is disordered. A compositionally biased stretch (polar residues) spans 320-338 (VTGQSEINTSAKSQPINST). A disordered region spans residues 393–413 (RKDENVTGQSEFNISTNSNLN). A helical membrane pass occupies residues 468 to 488 (YCIILITFQIVTVGMIIYLVF). Over 489 to 515 (RTMRKPCQSERAIPLNTFGFGNNSSHE) the chain is Cytoplasmic.

It belongs to the polydnaviridae Glc1.8 protein family.

It is found in the host membrane. In terms of biological role, involved in suppression of the insect cellular immune response. Inhibits host hemocyte adhesion and phagocytosis. This Microplitis demolitor (Parasitoid wasp) protein is Mucin-like protein Glc1.8a (O9).